A 423-amino-acid chain; its full sequence is Maltoporin 1 (423 aa).

Positions 1-24 are cleaved as a signal peptide; that stretch reads MITLRKLPIALAVAAGVLSTQAMA.

It belongs to the porin LamB (TC 1.B.3) family. In terms of assembly, homotrimer formed of three 18-stranded antiparallel beta-barrels, containing three independent channels.

Its subcellular location is the cell outer membrane. The enzyme catalyses beta-maltose(in) = beta-maltose(out). Its function is as follows. Involved in the transport of maltose and maltodextrins. The protein is Maltoporin 1 of Yersinia pestis bv. Antiqua (strain Antiqua).